A 193-amino-acid chain; its full sequence is Flagellar transcriptional regulator FlhC (193 aa).

Positions 137, 140, 158, and 161 each coordinate Zn(2+).

It belongs to the FlhC family. In terms of assembly, heterohexamer composed of two FlhC and four FlhD subunits. Each FlhC binds a FlhD dimer, forming a heterotrimer, and a hexamer assembles by dimerization of two heterotrimers. The cofactor is Zn(2+).

The protein resides in the cytoplasm. In terms of biological role, functions in complex with FlhD as a master transcriptional regulator that regulates transcription of several flagellar and non-flagellar operons by binding to their promoter region. Activates expression of class 2 flagellar genes, including fliA, which is a flagellum-specific sigma factor that turns on the class 3 genes. Also regulates genes whose products function in a variety of physiological pathways. The protein is Flagellar transcriptional regulator FlhC of Pectobacterium carotovorum (Erwinia carotovora).